We begin with the raw amino-acid sequence, 143 residues long: Small ribosomal subunit protein uS9 (143 aa).

Residues 123–143 are disordered; sequence RPEPKKFGGRGARARFQKSYR. The segment covering 134-143 has biased composition (basic residues); the sequence is ARARFQKSYR.

Belongs to the universal ribosomal protein uS9 family.

The sequence is that of Small ribosomal subunit protein uS9 (RPS16) from Eremothecium gossypii (strain ATCC 10895 / CBS 109.51 / FGSC 9923 / NRRL Y-1056) (Yeast).